Reading from the N-terminus, the 164-residue chain is Putative glutamine amidotransferase-like protein RP713 (164 aa).

Residues 39-164 (TIANPNSLFM…VITVKIIIYM (126 aa)) enclose the Glutamine amidotransferase type-1 domain.

The sequence is that of Putative glutamine amidotransferase-like protein RP713 from Rickettsia prowazekii (strain Madrid E).